Reading from the N-terminus, the 461-residue chain is MSKKPWAGRFTQPTDAFVEAFTASIDFDQRLYRYDIQGSMAHARMLSRQGIITGAEAQTIISGLESILADIEKGDFEFSVALEDIHMNIEARLIERIGSVGGKLHTARSRNDQVALDIRLYLRDEVKEVRSFLEKVQESLLEQAERNLGVIMPGYTHLQTAQPILFSHHMMAYYEMFRRDSWRMADIYKRINLLPLGAGALAGTTFPIDREYVAEQLGFDGVTRNSLDSVSDRDFALEFCSAASVVMMHLSRLSEELILWSSADFHFIDLSDAFCTGSSIMPQKKNPDVPELVRGKTGRVYGNLMSLLTVMKALPLAYNKDMQEDKEPLFDTIDTVKGSLKIFADMIAQMSIRADNMREAAARGFSTATDVADYVVRKGIPFRDAHEIVGKTVRYCIEHDKQIEELTLEEFKAFSEHIDSDIYDFITLEASVDSRRATGGTAREAVAREIGRARQERLQRM.

The protein belongs to the lyase 1 family. Argininosuccinate lyase subfamily.

It is found in the cytoplasm. It catalyses the reaction 2-(N(omega)-L-arginino)succinate = fumarate + L-arginine. The protein operates within amino-acid biosynthesis; L-arginine biosynthesis; L-arginine from L-ornithine and carbamoyl phosphate: step 3/3. This is Argininosuccinate lyase from Syntrophotalea carbinolica (strain DSM 2380 / NBRC 103641 / GraBd1) (Pelobacter carbinolicus).